The primary structure comprises 531 residues: Peptide chain release factor 3 (531 aa).

The tr-type G domain maps to 13–282 (SKRRTFAIIS…GLTQWAPSPM (270 aa)). GTP-binding positions include 22–29 (SHPDAGKT), 90–94 (DTPGH), and 144–147 (NKLD).

The protein belongs to the TRAFAC class translation factor GTPase superfamily. Classic translation factor GTPase family. PrfC subfamily.

The protein localises to the cytoplasm. In terms of biological role, increases the formation of ribosomal termination complexes and stimulates activities of RF-1 and RF-2. It binds guanine nucleotides and has strong preference for UGA stop codons. It may interact directly with the ribosome. The stimulation of RF-1 and RF-2 is significantly reduced by GTP and GDP, but not by GMP. This chain is Peptide chain release factor 3, found in Vibrio cholerae serotype O1 (strain ATCC 39315 / El Tor Inaba N16961).